We begin with the raw amino-acid sequence, 379 residues long: Queuine tRNA-ribosyltransferase (379 aa).

The Proton acceptor role is filled by Asp-94. Residues 94 to 98 (DSGGF), Asp-148, Gln-191, and Gly-218 contribute to the substrate site. Residues 249-255 (GVGSPDA) form an RNA binding region. Asp-268 (nucleophile) is an active-site residue. The segment at 273 to 277 (TRIAR) is RNA binding; important for wobble base 34 recognition. Residues Cys-306, Cys-308, Cys-311, and His-337 each coordinate Zn(2+).

This sequence belongs to the queuine tRNA-ribosyltransferase family. As to quaternary structure, homodimer. Within each dimer, one monomer is responsible for RNA recognition and catalysis, while the other monomer binds to the replacement base PreQ1. Zn(2+) serves as cofactor.

The enzyme catalyses 7-aminomethyl-7-carbaguanine + guanosine(34) in tRNA = 7-aminomethyl-7-carbaguanosine(34) in tRNA + guanine. It participates in tRNA modification; tRNA-queuosine biosynthesis. In terms of biological role, catalyzes the base-exchange of a guanine (G) residue with the queuine precursor 7-aminomethyl-7-deazaguanine (PreQ1) at position 34 (anticodon wobble position) in tRNAs with GU(N) anticodons (tRNA-Asp, -Asn, -His and -Tyr). Catalysis occurs through a double-displacement mechanism. The nucleophile active site attacks the C1' of nucleotide 34 to detach the guanine base from the RNA, forming a covalent enzyme-RNA intermediate. The proton acceptor active site deprotonates the incoming PreQ1, allowing a nucleophilic attack on the C1' of the ribose to form the product. After dissociation, two additional enzymatic reactions on the tRNA convert PreQ1 to queuine (Q), resulting in the hypermodified nucleoside queuosine (7-(((4,5-cis-dihydroxy-2-cyclopenten-1-yl)amino)methyl)-7-deazaguanosine). This Staphylococcus haemolyticus (strain JCSC1435) protein is Queuine tRNA-ribosyltransferase.